The following is a 346-amino-acid chain: Uroporphyrinogen decarboxylase (346 aa).

Residues Arg23–Arg27, Asp73, Tyr151, Ser206, and His321 contribute to the substrate site.

The protein belongs to the uroporphyrinogen decarboxylase family. In terms of assembly, homodimer.

Its subcellular location is the cytoplasm. It catalyses the reaction uroporphyrinogen III + 4 H(+) = coproporphyrinogen III + 4 CO2. It functions in the pathway porphyrin-containing compound metabolism; protoporphyrin-IX biosynthesis; coproporphyrinogen-III from 5-aminolevulinate: step 4/4. Its function is as follows. Catalyzes the decarboxylation of four acetate groups of uroporphyrinogen-III to yield coproporphyrinogen-III. The protein is Uroporphyrinogen decarboxylase of Sulfurovum sp. (strain NBC37-1).